A 431-amino-acid polypeptide reads, in one-letter code: UDP-N-acetylmuramate--L-alanine ligase (431 aa).

Residue 108 to 114 (GAHGKST) coordinates ATP.

This sequence belongs to the MurCDEF family.

Its subcellular location is the cytoplasm. The enzyme catalyses UDP-N-acetyl-alpha-D-muramate + L-alanine + ATP = UDP-N-acetyl-alpha-D-muramoyl-L-alanine + ADP + phosphate + H(+). The protein operates within cell wall biogenesis; peptidoglycan biosynthesis. In terms of biological role, cell wall formation. This chain is UDP-N-acetylmuramate--L-alanine ligase, found in Campylobacter jejuni (strain RM1221).